A 190-amino-acid chain; its full sequence is Threonylcarbamoyl-AMP synthase (190 aa).

Positions 7–190 (GDAIAAAIDV…ALTGELFRQG (184 aa)) constitute a YrdC-like domain.

It belongs to the SUA5 family. TsaC subfamily.

The protein localises to the cytoplasm. The enzyme catalyses L-threonine + hydrogencarbonate + ATP = L-threonylcarbamoyladenylate + diphosphate + H2O. In terms of biological role, required for the formation of a threonylcarbamoyl group on adenosine at position 37 (t(6)A37) in tRNAs that read codons beginning with adenine. Catalyzes the conversion of L-threonine, HCO(3)(-)/CO(2) and ATP to give threonylcarbamoyl-AMP (TC-AMP) as the acyladenylate intermediate, with the release of diphosphate. The chain is Threonylcarbamoyl-AMP synthase from Escherichia coli O157:H7.